Here is a 189-residue protein sequence, read N- to C-terminus: Protein GrpE (189 aa).

A compositionally biased stretch (basic residues) spans 1–12 (MDKKKHGSHAGA). The interval 1-36 (MDKKKHGSHAGAHHTDEPAAETVAPAAEGAPAAADR) is disordered. Positions 20 to 34 (AETVAPAAEGAPAAA) are enriched in low complexity.

The protein belongs to the GrpE family. In terms of assembly, homodimer.

Its subcellular location is the cytoplasm. In terms of biological role, participates actively in the response to hyperosmotic and heat shock by preventing the aggregation of stress-denatured proteins, in association with DnaK and GrpE. It is the nucleotide exchange factor for DnaK and may function as a thermosensor. Unfolded proteins bind initially to DnaJ; upon interaction with the DnaJ-bound protein, DnaK hydrolyzes its bound ATP, resulting in the formation of a stable complex. GrpE releases ADP from DnaK; ATP binding to DnaK triggers the release of the substrate protein, thus completing the reaction cycle. Several rounds of ATP-dependent interactions between DnaJ, DnaK and GrpE are required for fully efficient folding. This chain is Protein GrpE, found in Geobacter metallireducens (strain ATCC 53774 / DSM 7210 / GS-15).